The sequence spans 346 residues: Histidinol-phosphate aminotransferase (346 aa).

At Lys-209 the chain carries N6-(pyridoxal phosphate)lysine.

The protein belongs to the class-II pyridoxal-phosphate-dependent aminotransferase family. Histidinol-phosphate aminotransferase subfamily. In terms of assembly, homodimer. Pyridoxal 5'-phosphate serves as cofactor.

It catalyses the reaction L-histidinol phosphate + 2-oxoglutarate = 3-(imidazol-4-yl)-2-oxopropyl phosphate + L-glutamate. Its pathway is amino-acid biosynthesis; L-histidine biosynthesis; L-histidine from 5-phospho-alpha-D-ribose 1-diphosphate: step 7/9. In Vibrio cholerae serotype O1 (strain ATCC 39315 / El Tor Inaba N16961), this protein is Histidinol-phosphate aminotransferase.